The primary structure comprises 70 residues: Exodeoxyribonuclease 7 small subunit (70 aa).

This sequence belongs to the XseB family. As to quaternary structure, heterooligomer composed of large and small subunits.

It localises to the cytoplasm. It catalyses the reaction Exonucleolytic cleavage in either 5'- to 3'- or 3'- to 5'-direction to yield nucleoside 5'-phosphates.. Functionally, bidirectionally degrades single-stranded DNA into large acid-insoluble oligonucleotides, which are then degraded further into small acid-soluble oligonucleotides. The polypeptide is Exodeoxyribonuclease 7 small subunit (Streptococcus sanguinis (strain SK36)).